We begin with the raw amino-acid sequence, 223 residues long: Ubiquitin-conjugating enzyme E2 S (223 aa).

M1 is modified (N-acetylmethionine). The region spanning 11–157 is the UBC core domain; it reads HIIRLVYKEV…ARLLTEIHGG (147 aa). C95 functions as the Glycyl thioester intermediate in the catalytic mechanism. Residues 155-223 are disordered; the sequence is HGGAGGPSGG…TDKKRALRRL (69 aa). Residues 169-195 are compositionally biased toward low complexity; the sequence is GRATASGAAASTADPTAPGGPAGAEGP. The residue at position 174 (S174) is a Phosphoserine. Residues 209–223 show a composition bias toward basic residues; the sequence is AAKKKTDKKRALRRL.

This sequence belongs to the ubiquitin-conjugating enzyme family. Component of the APC/C complex, composed of at least 14 distinct subunits that assemble into a complex of at least 19 chains with a combined molecular mass of around 1.2 MDa. Within this complex, directly interacts with ANAPC2 and ANAPC4. Interacts with CDC20, FZR1/CDH1 and VHL. Autoubiquitinated by the APC/C complex during G1, leading to its degradation by the proteasome.

It catalyses the reaction S-ubiquitinyl-[E1 ubiquitin-activating enzyme]-L-cysteine + [E2 ubiquitin-conjugating enzyme]-L-cysteine = [E1 ubiquitin-activating enzyme]-L-cysteine + S-ubiquitinyl-[E2 ubiquitin-conjugating enzyme]-L-cysteine.. Its pathway is protein modification; protein ubiquitination. Functionally, accepts ubiquitin from the E1 complex and catalyzes its covalent attachment to other proteins. Catalyzes 'Lys-11'-linked polyubiquitination. Acts as an essential factor of the anaphase promoting complex/cyclosome (APC/C), a cell cycle-regulated ubiquitin ligase that controls progression through mitosis. Acts by specifically elongating 'Lys-11'-linked polyubiquitin chains initiated by the E2 enzyme UBE2C/UBCH10 on APC/C substrates, enhancing the degradation of APC/C substrates by the proteasome and promoting mitotic exit. Also acts by elongating ubiquitin chains initiated by the E2 enzyme UBE2D1/UBCH5 in vitro; it is however unclear whether UBE2D1/UBCH5 acts as an E2 enzyme for the APC/C in vivo. Also involved in ubiquitination and subsequent degradation of VHL, resulting in an accumulation of HIF1A. In vitro able to promote polyubiquitination using all 7 ubiquitin Lys residues, except 'Lys-48'-linked polyubiquitination. The polypeptide is Ubiquitin-conjugating enzyme E2 S (UBE2S) (Bos taurus (Bovine)).